The sequence spans 222 residues: N-(5'-phosphoribosyl)anthranilate isomerase (222 aa).

The protein belongs to the TrpF family.

The catalysed reaction is N-(5-phospho-beta-D-ribosyl)anthranilate = 1-(2-carboxyphenylamino)-1-deoxy-D-ribulose 5-phosphate. It functions in the pathway amino-acid biosynthesis; L-tryptophan biosynthesis; L-tryptophan from chorismate: step 3/5. In Xanthomonas campestris pv. campestris (strain 8004), this protein is N-(5'-phosphoribosyl)anthranilate isomerase.